The following is a 404-amino-acid chain: Argininosuccinate synthase (404 aa).

ATP contacts are provided by residues 12-20 (AYSGGLDTS) and Ala39. L-citrulline contacts are provided by Tyr91 and Ser96. Gly121 contacts ATP. The L-aspartate site is built by Thr123, Asn127, and Asp128. L-citrulline is bound at residue Asn127. The L-citrulline site is built by Arg131, Ser180, Ser189, Glu265, and Tyr277.

It belongs to the argininosuccinate synthase family. Type 1 subfamily. As to quaternary structure, homotetramer.

The protein resides in the cytoplasm. The enzyme catalyses L-citrulline + L-aspartate + ATP = 2-(N(omega)-L-arginino)succinate + AMP + diphosphate + H(+). It participates in amino-acid biosynthesis; L-arginine biosynthesis; L-arginine from L-ornithine and carbamoyl phosphate: step 2/3. This chain is Argininosuccinate synthase, found in Vibrio campbellii (strain ATCC BAA-1116).